Here is a 141-residue protein sequence, read N- to C-terminus: Aspartate 1-decarboxylase (141 aa).

Catalysis depends on S25, which acts as the Schiff-base intermediate with substrate; via pyruvic acid. Pyruvic acid (Ser) is present on S25. T57 contacts substrate. Catalysis depends on Y58, which acts as the Proton donor. Position 73-75 (73-75 (GAA)) interacts with substrate.

Belongs to the PanD family. In terms of assembly, heterooctamer of four alpha and four beta subunits. Pyruvate serves as cofactor. Post-translationally, is synthesized initially as an inactive proenzyme, which is activated by self-cleavage at a specific serine bond to produce a beta-subunit with a hydroxyl group at its C-terminus and an alpha-subunit with a pyruvoyl group at its N-terminus.

It localises to the cytoplasm. The catalysed reaction is L-aspartate + H(+) = beta-alanine + CO2. The protein operates within cofactor biosynthesis; (R)-pantothenate biosynthesis; beta-alanine from L-aspartate: step 1/1. In terms of biological role, catalyzes the pyruvoyl-dependent decarboxylation of aspartate to produce beta-alanine. This Pseudarthrobacter chlorophenolicus (strain ATCC 700700 / DSM 12829 / CIP 107037 / JCM 12360 / KCTC 9906 / NCIMB 13794 / A6) (Arthrobacter chlorophenolicus) protein is Aspartate 1-decarboxylase.